We begin with the raw amino-acid sequence, 106 residues long: MLLTTTNTIEGKEITQYFGIVSGETIIGANVFKDFFAGIRDIVGGRAGSYESVLREAKETALKEMSDHAARMGANAVIAVDLDYETVGGSGSMLMVTAAGTAVRYQ.

The protein belongs to the UPF0145 family.

The sequence is that of UPF0145 protein BDI_2732 from Parabacteroides distasonis (strain ATCC 8503 / DSM 20701 / CIP 104284 / JCM 5825 / NCTC 11152).